We begin with the raw amino-acid sequence, 79 residues long: Putative membrane protein insertion efficiency factor (79 aa).

The protein belongs to the UPF0161 family.

It localises to the cell inner membrane. Could be involved in insertion of integral membrane proteins into the membrane. This is Putative membrane protein insertion efficiency factor from Bacteroides thetaiotaomicron (strain ATCC 29148 / DSM 2079 / JCM 5827 / CCUG 10774 / NCTC 10582 / VPI-5482 / E50).